The following is a 548-amino-acid chain: Chaperonin GroEL (548 aa).

Residues 29–32, K50, 86–90, G416, and D497 contribute to the ATP site; these read TLGP and DGTTT.

Belongs to the chaperonin (HSP60) family. As to quaternary structure, forms a cylinder of 14 subunits composed of two heptameric rings stacked back-to-back. Interacts with the co-chaperonin GroES.

The protein resides in the cytoplasm. The enzyme catalyses ATP + H2O + a folded polypeptide = ADP + phosphate + an unfolded polypeptide.. Its function is as follows. Together with its co-chaperonin GroES, plays an essential role in assisting protein folding. The GroEL-GroES system forms a nano-cage that allows encapsulation of the non-native substrate proteins and provides a physical environment optimized to promote and accelerate protein folding. The chain is Chaperonin GroEL from Neorickettsia sennetsu (strain ATCC VR-367 / Miyayama) (Ehrlichia sennetsu).